We begin with the raw amino-acid sequence, 439 residues long: UDP-N-acetylglucosamine--N-acetylmuramyl-(pentapeptide) pyrophosphoryl-undecaprenol N-acetylglucosamine transferase (439 aa).

UDP-N-acetyl-alpha-D-glucosamine is bound by residues 25 to 27 (TGG), R218, S248, and Q362.

The protein belongs to the glycosyltransferase 28 family. MurG subfamily.

The protein localises to the cell membrane. The catalysed reaction is di-trans,octa-cis-undecaprenyl diphospho-N-acetyl-alpha-D-muramoyl-L-alanyl-D-glutamyl-meso-2,6-diaminopimeloyl-D-alanyl-D-alanine + UDP-N-acetyl-alpha-D-glucosamine = di-trans,octa-cis-undecaprenyl diphospho-[N-acetyl-alpha-D-glucosaminyl-(1-&gt;4)]-N-acetyl-alpha-D-muramoyl-L-alanyl-D-glutamyl-meso-2,6-diaminopimeloyl-D-alanyl-D-alanine + UDP + H(+). It functions in the pathway cell wall biogenesis; peptidoglycan biosynthesis. Its function is as follows. Cell wall formation. Catalyzes the transfer of a GlcNAc subunit on undecaprenyl-pyrophosphoryl-MurNAc-pentapeptide (lipid intermediate I) to form undecaprenyl-pyrophosphoryl-MurNAc-(pentapeptide)GlcNAc (lipid intermediate II). This Roseiflexus sp. (strain RS-1) protein is UDP-N-acetylglucosamine--N-acetylmuramyl-(pentapeptide) pyrophosphoryl-undecaprenol N-acetylglucosamine transferase.